The sequence spans 395 residues: ATP synthase subunit beta, chloroplastic (395 aa).

Position 72 to 79 (72 to 79) interacts with ATP; sequence GGAGVGKT.

Belongs to the ATPase alpha/beta chains family. In terms of assembly, F-type ATPases have 2 components, CF(1) - the catalytic core - and CF(0) - the membrane proton channel. CF(1) has five subunits: alpha(3), beta(3), gamma(1), delta(1), epsilon(1). CF(0) has four main subunits: a(1), b(1), b'(1) and c(9-12).

The protein resides in the plastid. It is found in the chloroplast thylakoid membrane. The enzyme catalyses ATP + H2O + 4 H(+)(in) = ADP + phosphate + 5 H(+)(out). Functionally, produces ATP from ADP in the presence of a proton gradient across the membrane. The catalytic sites are hosted primarily by the beta subunits. The sequence is that of ATP synthase subunit beta, chloroplastic from Blechnum occidentale (Hammock fern).